The primary structure comprises 478 residues: Putative multidrug resistance outer membrane protein MdtQ (478 aa).

An N-terminal signal peptide occupies residues Met1–Gly21. Cys22 is lipidated: N-palmitoyl cysteine. Residue Cys22 is the site of S-diacylglycerol cysteine attachment.

This sequence belongs to the outer membrane factor (OMF) (TC 1.B.17) family.

Its subcellular location is the cell outer membrane. In terms of biological role, could be involved in resistance to puromycin, acriflavine and tetraphenylarsonium chloride. This chain is Putative multidrug resistance outer membrane protein MdtQ (mdtQ), found in Escherichia coli (strain K12).